The following is a 257-amino-acid chain: Thioredoxin-dependent peroxide reductase, mitochondrial (257 aa).

The N-terminal 62 residues, 1-62 (MAATAGRLFR…FAFSTSSSYH (62 aa)), are a transit peptide targeting the mitochondrion. A Thioredoxin domain is found at 64-222 (PAVTQHAPYF…TLRLVKAFQF (159 aa)). An N6-succinyllysine modification is found at lysine 84. Lysine 92 is subject to N6-acetyllysine; alternate. Position 92 is an N6-succinyllysine; alternate (lysine 92). Cysteine 109 (cysteine sulfenic acid (-SOH) intermediate) is an active-site residue. Position 147 is a phosphothreonine (threonine 147).

Belongs to the peroxiredoxin family. AhpC/Prx1 subfamily. In terms of assembly, homodimer; disulfide-linked, upon oxidation. 6 homodimers assemble to form a ring-like dodecamer. Interacts with NEK6. Interacts with LRRK2. Interacts with MAP3K13. Interacts with RPS6KC1 (via PX domain). In terms of processing, phosphorylated by LRRK2; phosphorylation reduces perodixase activity. The enzyme can be inactivated by further oxidation of the cysteine sulfenic acid (C(P)-SOH) to sulphinic acid (C(P)-SO2H) and sulphonic acid (C(P)-SO3H) instead of its condensation to a disulfide bond. Post-translationally, S-palmitoylated. Predominantly expressed in adrenal cortex. Also detected in liver, renal cortex and medulla, and adrenal medulla (at protein level).

Its subcellular location is the mitochondrion matrix. The protein resides in the cytoplasm. It is found in the early endosome. It carries out the reaction a hydroperoxide + [thioredoxin]-dithiol = an alcohol + [thioredoxin]-disulfide + H2O. Functionally, thiol-specific peroxidase that catalyzes the reduction of hydrogen peroxide and organic hydroperoxides to water and alcohols, respectively. Plays a role in cell protection against oxidative stress by detoxifying peroxides. Acts synergistically with MAP3K13 to regulate the activation of NF-kappa-B in the cytosol. Required for the maintenance of physical strength. The chain is Thioredoxin-dependent peroxide reductase, mitochondrial (PRDX3) from Bos taurus (Bovine).